The following is a 408-amino-acid chain: Aspartokinase 2 (408 aa).

ATP is bound at residue 7 to 10 (KFGG). Substrate is bound at residue 25-30 (RAIAEK). Ser-41 provides a ligand contact to ATP. Residues 47 to 49 (TDE), Glu-74, 125 to 126 (LE), 150 to 153 (RGGS), and Ser-153 contribute to the substrate site. ATP contacts are provided by residues 173–174 (TD) and 179–184 (FTTDPR). ACT domains are found at residues 264-337 (VTIY…TESK) and 343-408 (IVGS…PSAV). Substrate contacts are provided by residues 289–291 (NVD), Gln-295, 354–355 (VA), 368–369 (LI), and 375–376 (SE).

It belongs to the aspartokinase family. Tetramer consisting of 2 isoforms Alpha (catalytic and regulation) and of a homodimer of 2 isoforms Beta (regulation).

It catalyses the reaction L-aspartate + ATP = 4-phospho-L-aspartate + ADP. It participates in amino-acid biosynthesis; L-lysine biosynthesis via DAP pathway; (S)-tetrahydrodipicolinate from L-aspartate: step 1/4. Its pathway is amino-acid biosynthesis; L-methionine biosynthesis via de novo pathway; L-homoserine from L-aspartate: step 1/3. It functions in the pathway amino-acid biosynthesis; L-threonine biosynthesis; L-threonine from L-aspartate: step 1/5. With respect to regulation, lysine-sensitive. Regulated by degradation in response to starvation of cells for various nutrients. Ammonium starvation induced the fastest aspartokinase II decline, followed by amino acid starvation and glucose limitation. In terms of biological role, catalyzes the phosphorylation of the beta-carboxyl group of aspartic acid with ATP to yield 4-phospho-L-aspartate, which is involved in the branched biosynthetic pathway leading to the biosynthesis of amino acids threonine, isoleucine and methionine. The polypeptide is Aspartokinase 2 (lysC) (Bacillus subtilis (strain 168)).